Consider the following 111-residue polypeptide: MISTVALFWALCVVCVVNMARYYSSLRALLVVLRGCDPLLYQYVDGGGFFTSHGQPSKQIRLVGYIFAQRYLDHHDPEFIRRCERLRGQFILTSALCGLVVVSLVALMLWY.

2 helical membrane passes run 1-21 and 90-110; these read MIST…NMAR and FILT…LMLW.

This sequence belongs to the universal stress protein B family.

The protein localises to the cell inner membrane. The chain is Universal stress protein B from Yersinia pseudotuberculosis serotype O:1b (strain IP 31758).